The sequence spans 246 residues: Purine nucleoside phosphorylase ORF3 (246 aa).

Zn(2+)-binding residues include H71, C110, and H127.

It belongs to the purine nucleoside phosphorylase YfiH/LACC1 family. As to quaternary structure, homodimer. It depends on Cu(2+) as a cofactor. The cofactor is Zn(2+).

The enzyme catalyses adenosine + phosphate = alpha-D-ribose 1-phosphate + adenine. It catalyses the reaction S-methyl-5'-thioadenosine + phosphate = 5-(methylsulfanyl)-alpha-D-ribose 1-phosphate + adenine. The catalysed reaction is inosine + phosphate = alpha-D-ribose 1-phosphate + hypoxanthine. It carries out the reaction adenosine + H2O + H(+) = inosine + NH4(+). In terms of biological role, purine nucleoside enzyme that catalyzes the phosphorolysis of adenosine and inosine nucleosides, yielding D-ribose 1-phosphate and the respective free bases, adenine and hypoxanthine. Also catalyzes the phosphorolysis of S-methyl-5'-thioadenosine into adenine and S-methyl-5-thio-alpha-D-ribose 1-phosphate. Also has adenosine deaminase activity. In Streptomyces griseus, this protein is Purine nucleoside phosphorylase ORF3.